Reading from the N-terminus, the 808-residue chain is Probable mannosyl-oligosaccharide glucosidase (808 aa).

Over 1–11 (MVSDMLGGNKR) the chain is Cytoplasmic. A helical; Signal-anchor for type II membrane protein transmembrane segment spans residues 12-31 (WILFGLLSFLLNCVLVSCSV). Topologically, residues 32–808 (EDIEKAANDS…LVVNIMSENY (777 aa)) are lumenal. Asn-39 carries an N-linked (GlcNAc...) asparagine glycan. Asp-580 (proton donor) is an active-site residue. Catalysis depends on Glu-778, which acts as the Proton acceptor.

Belongs to the glycosyl hydrolase 63 family.

The protein resides in the endoplasmic reticulum membrane. The catalysed reaction is N(4)-(alpha-D-Glc-(1-&gt;2)-alpha-D-Glc-(1-&gt;3)-alpha-D-Glc-(1-&gt;3)-alpha-D-Man-(1-&gt;2)-alpha-D-Man-(1-&gt;2)-alpha-D-Man-(1-&gt;3)-[alpha-D-Man-(1-&gt;2)-alpha-D-Man-(1-&gt;3)-[alpha-D-Man-(1-&gt;2)-alpha-D-Man-(1-&gt;6)]-alpha-D-Man-(1-&gt;6)]-beta-D-Man-(1-&gt;4)-beta-D-GlcNAc-(1-&gt;4)-beta-D-GlcNAc)-L-asparaginyl-[protein] + H2O = N(4)-(alpha-D-Glc-(1-&gt;3)-alpha-D-Glc-(1-&gt;3)-alpha-D-Man-(1-&gt;2)-alpha-D-Man-(1-&gt;2)-alpha-D-Man-(1-&gt;3)-[alpha-D-Man-(1-&gt;2)-alpha-D-Man-(1-&gt;3)-[alpha-D-Man-(1-&gt;2)-alpha-D-Man-(1-&gt;6)]-alpha-D-Man-(1-&gt;6)]-beta-D-Man-(1-&gt;4)-beta-D-GlcNAc-(1-&gt;4)-beta-D-GlcNAc)-L-asparaginyl-[protein] + beta-D-glucose. Its function is as follows. Cleaves the distal alpha 1,2-linked glucose residue from the Glc(3)Man(9)GlcNAc(2) oligosaccharide precursor highly specifically. This Schizosaccharomyces pombe (strain 972 / ATCC 24843) (Fission yeast) protein is Probable mannosyl-oligosaccharide glucosidase.